The following is a 390-amino-acid chain: S-adenosylmethionine synthase 3 (390 aa).

Residue Glu9 participates in Mg(2+) binding. An ATP-binding site is contributed by His15. A K(+)-binding site is contributed by Glu43. Residues Glu56 and Gln99 each contribute to the L-methionine site. Residues 167–169 (DGK), 235–238 (SGRF), Asp246, 252–253 (RK), Ala269, Lys273, and Lys277 contribute to the ATP site. An L-methionine-binding site is contributed by Asp246. Lys277 contributes to the L-methionine binding site.

The protein belongs to the AdoMet synthase family. In terms of assembly, homotetramer. Mn(2+) is required as a cofactor. Mg(2+) serves as cofactor. It depends on Co(2+) as a cofactor. Requires K(+) as cofactor. In terms of tissue distribution, mostly expressed in stems and leaves.

It is found in the cytoplasm. It carries out the reaction L-methionine + ATP + H2O = S-adenosyl-L-methionine + phosphate + diphosphate. The protein operates within amino-acid biosynthesis; S-adenosyl-L-methionine biosynthesis; S-adenosyl-L-methionine from L-methionine: step 1/1. Its function is as follows. Catalyzes the formation of S-adenosylmethionine from methionine and ATP. The reaction comprises two steps that are both catalyzed by the same enzyme: formation of S-adenosylmethionine (AdoMet) and triphosphate, and subsequent hydrolysis of the triphosphate. The chain is S-adenosylmethionine synthase 3 (SAM3) from Solanum lycopersicum (Tomato).